The following is an 846-amino-acid chain: Penicillin G acylase (846 aa).

The N-terminal stretch at 1–26 is a signal peptide; the sequence is MKNRNRMIVNCVTASLMYYWSLPALA. Residue glutamate 178 coordinates Ca(2+). Positions 236–289 are cleaved as a propeptide — spacer peptide; the sequence is ALLPRYDLPAPMLDRPAKGADGALLALTAGKNRETIAAQFAQGGANGLAGYPTT. The Nucleophile role is filled by serine 290. The Ca(2+) site is built by aspartate 362, valine 364, aspartate 365, proline 494, and aspartate 541.

Belongs to the peptidase S45 family. As to quaternary structure, heterodimer of an alpha subunit and a beta subunit processed from the same precursor. The cofactor is Ca(2+).

It is found in the periplasm. The enzyme catalyses a penicillin + H2O = 6-aminopenicillanate + a carboxylate. The protein is Penicillin G acylase (pac) of Escherichia coli.